The chain runs to 172 residues: Adenine phosphoribosyltransferase (172 aa).

Belongs to the purine/pyrimidine phosphoribosyltransferase family. As to quaternary structure, homodimer.

It is found in the cytoplasm. The enzyme catalyses AMP + diphosphate = 5-phospho-alpha-D-ribose 1-diphosphate + adenine. It participates in purine metabolism; AMP biosynthesis via salvage pathway; AMP from adenine: step 1/1. Functionally, catalyzes a salvage reaction resulting in the formation of AMP, that is energically less costly than de novo synthesis. The sequence is that of Adenine phosphoribosyltransferase from Roseiflexus sp. (strain RS-1).